We begin with the raw amino-acid sequence, 473 residues long: Sulfhydrylase-like protein lolC1 (473 aa).

The residue at position 226 (Lys-226) is an N6-(pyridoxal phosphate)lysine.

It belongs to the trans-sulfuration enzymes family. Pyridoxal 5'-phosphate is required as a cofactor.

Its pathway is alkaloid biosynthesis. Its function is as follows. Sulfhydrylase-like protein; part of the gene cluster that mediates the biosynthesis of loline alkaloids, potent insecticidal agents composed of a pyrrolizidine ring system and an uncommon ether bridge linking carbons 2 and 7. Lolines are structurally differentiated by the various modifications of the L-amino group and include norloline, loline, N-methylloline, N-acetylloline, N-acetylnorloline, and N-formylloline. The first committed step is the condensation of O-acetyl-L-homoserine (derived from L-aspartic acid) and L-proline, probably catalyzed by the gamma-type pyridoxal 5'-phosphate(PLP)-dependent enzyme lolC, to give the diamino diacid, NACPP. Ensuing cyclization, decarboxylation, and acetylation steps yield 1-exo-acetamidopyrrolizidine (AcAP). LolO is required for installation of the ether bridge upon the pathway intermediate, 1-exo-acetamidopyrrolizidine (AcAP). In sequential 2-oxoglutarate- and O(2)-consuming steps, lolO removes hydrogens from C2 and C7 of AcAP to form both carbon-oxygen bonds in N-acetylnorloline (NANL), the precursor to all other lolines. The enzymes lolD, lolE, lolF and lolT have also been proposed to be involved in the ether-bridge installation. Further processing of the exocyclic moiety of NANL by fungal N-acetamidase (LolN), methyltransferase (LolM), and cytochrome P450 (LolP) enzymes, with occasional involvement of a plant acetyltransferase, generates the other known lolines. LolN transforms NANL to norlonine which is monomethylated and dimethylated to respectively lonine and N-methyllonine (NML) by lolM. LolP catalyzes hydroxylation of the methyl group in N-methylloline (NML) and further oxygenation to N-formylloline (NFL). A plant acetyltransferase is responsible for the acetylation of loline to form N-acetylloline (NAL). LolA might interact with aspartate kinase to prevent feedback inhibition of its activity by these end products and thereby promote production of L-homoserine from L-aspartate. This Epichloe uncinata (Endophyte fungus) protein is Sulfhydrylase-like protein lolC1.